A 414-amino-acid polypeptide reads, in one-letter code: Bifunctional protein GlmU (414 aa).

The segment at 1 to 208 is pyrophosphorylase; the sequence is MDAVILCAGS…SSKLYGIELN (208 aa). UTP-binding positions include 6-9, Gln74, and Gly79; that span reads LCAG. Positions 80, 130, 142, and 162 each coordinate N-acetyl-alpha-D-glucosamine 1-phosphate. Residues 209 to 228 form a linker region; the sequence is GYWNDIGRPWDVLSANNYFL. The segment at 229–414 is N-acetyltransferase; the sequence is KNIMPKISGN…KDELIIKKRN (186 aa). Residue His312 is the Proton acceptor of the active site. Acetyl-CoA-binding residues include Ala388 and Lys405.

This sequence in the N-terminal section; belongs to the N-acetylglucosamine-1-phosphate uridyltransferase family. The protein in the C-terminal section; belongs to the transferase hexapeptide repeat family.

The enzyme catalyses N-acetyl-alpha-D-glucosamine 1-phosphate + UTP + H(+) = UDP-N-acetyl-alpha-D-glucosamine + diphosphate. It carries out the reaction alpha-D-glucosamine 1-phosphate + acetyl-CoA = N-acetyl-alpha-D-glucosamine 1-phosphate + CoA + H(+). Its pathway is nucleotide-sugar biosynthesis; UDP-N-acetyl-alpha-D-glucosamine biosynthesis; N-acetyl-alpha-D-glucosamine 1-phosphate from alpha-D-glucosamine 6-phosphate (route II): step 2/2. It functions in the pathway nucleotide-sugar biosynthesis; UDP-N-acetyl-alpha-D-glucosamine biosynthesis; UDP-N-acetyl-alpha-D-glucosamine from N-acetyl-alpha-D-glucosamine 1-phosphate: step 1/1. Its function is as follows. Catalyzes the last two sequential reactions in the de novo biosynthetic pathway for UDP-N-acetyl-glucosamine (UDP-GlcNAc). Responsible for the acetylation of GlcN-1-P to GlcNAc-1-P, and for the uridyl transfer from UTP to GlcNAc-1-P, to produce UDP-GlcNAc and pyrophosphate. The sequence is that of Bifunctional protein GlmU from Methanococcus vannielii (strain ATCC 35089 / DSM 1224 / JCM 13029 / OCM 148 / SB).